The chain runs to 98 residues: NADH-ubiquinone oxidoreductase chain 4L (98 aa).

3 helical membrane passes run 1-21, 29-49, and 61-81; these read MSSIYMNILLAFTMALLGLLM, SLLCLEGMMLSLFILSTVTML, and VMLMVFAACEAAVGLALLVTV.

The protein belongs to the complex I subunit 4L family. In terms of assembly, core subunit of respiratory chain NADH dehydrogenase (Complex I) which is composed of 45 different subunits.

It is found in the mitochondrion inner membrane. It catalyses the reaction a ubiquinone + NADH + 5 H(+)(in) = a ubiquinol + NAD(+) + 4 H(+)(out). Functionally, core subunit of the mitochondrial membrane respiratory chain NADH dehydrogenase (Complex I) which catalyzes electron transfer from NADH through the respiratory chain, using ubiquinone as an electron acceptor. Part of the enzyme membrane arm which is embedded in the lipid bilayer and involved in proton translocation. The polypeptide is NADH-ubiquinone oxidoreductase chain 4L (MT-ND4L) (Tamandua tetradactyla (Southern anteater)).